Consider the following 264-residue polypeptide: Thiazole synthase (264 aa).

Lysine 98 functions as the Schiff-base intermediate with DXP in the catalytic mechanism. Residues glycine 159, alanine 185–glycine 186, and alanine 207–threonine 208 contribute to the 1-deoxy-D-xylulose 5-phosphate site.

Belongs to the ThiG family. As to quaternary structure, homotetramer. Forms heterodimers with either ThiH or ThiS.

It is found in the cytoplasm. The enzyme catalyses [ThiS sulfur-carrier protein]-C-terminal-Gly-aminoethanethioate + 2-iminoacetate + 1-deoxy-D-xylulose 5-phosphate = [ThiS sulfur-carrier protein]-C-terminal Gly-Gly + 2-[(2R,5Z)-2-carboxy-4-methylthiazol-5(2H)-ylidene]ethyl phosphate + 2 H2O + H(+). The protein operates within cofactor biosynthesis; thiamine diphosphate biosynthesis. In terms of biological role, catalyzes the rearrangement of 1-deoxy-D-xylulose 5-phosphate (DXP) to produce the thiazole phosphate moiety of thiamine. Sulfur is provided by the thiocarboxylate moiety of the carrier protein ThiS. In vitro, sulfur can be provided by H(2)S. This Mycobacterium marinum (strain ATCC BAA-535 / M) protein is Thiazole synthase.